The sequence spans 306 residues: Oxygen-dependent coproporphyrinogen-III oxidase (306 aa).

S94 is a substrate binding site. A divalent metal cation is bound by residues H98 and H108. Residue H108 is the Proton donor of the active site. Substrate is bound at residue 110–112; it reads NVR. H147 and H177 together coordinate a divalent metal cation. An important for dimerization region spans residues 242–277; it reads YVEFNLVYDRGTLFGLQTGGRTESILMSMPPLVRWE. A substrate-binding site is contributed by 260 to 262; it reads GGR.

It belongs to the aerobic coproporphyrinogen-III oxidase family. As to quaternary structure, homodimer. The cofactor is a divalent metal cation.

The protein resides in the cytoplasm. It carries out the reaction coproporphyrinogen III + O2 + 2 H(+) = protoporphyrinogen IX + 2 CO2 + 2 H2O. Its pathway is porphyrin-containing compound metabolism; protoporphyrin-IX biosynthesis; protoporphyrinogen-IX from coproporphyrinogen-III (O2 route): step 1/1. Functionally, involved in the heme biosynthesis. Catalyzes the aerobic oxidative decarboxylation of propionate groups of rings A and B of coproporphyrinogen-III to yield the vinyl groups in protoporphyrinogen-IX. The chain is Oxygen-dependent coproporphyrinogen-III oxidase from Shewanella woodyi (strain ATCC 51908 / MS32).